The primary structure comprises 349 residues: MIEKLDSIEKKYEELENLIGNPEIIADIARWQEYVKAHAELADIVAVYRDYKKVVKEIQDTIALMKEEPDEDLREMAQAELDELTEKKDNLENRLKMLLLPKDPNDEKNVILEIRAGTGGEEAALFAADLFRMYSRYAERQGWRTEILDANYTDIGGFKEVISLIEGKGVYSRMKFESGVHRVQRIPTTESGGRIHTSAATVAVLPEAEEVDVQIDPDDLRIDVFCSSGHGGQSVNTTQSAVRITHIPTGIVVSMQDEKSQHKNKEKAMKVLRARLLDRVQQEHQQKIASTRKSMVGTGDRSERIRTYNFPQNRVTDHRVGLTLHRLDSVLDGDLDEIIDTLILKGGQA.

Q233 is modified (N5-methylglutamine).

This sequence belongs to the prokaryotic/mitochondrial release factor family. Methylated by PrmC. Methylation increases the termination efficiency of RF1.

The protein resides in the cytoplasm. In terms of biological role, peptide chain release factor 1 directs the termination of translation in response to the peptide chain termination codons UAG and UAA. The chain is Peptide chain release factor 1 from Pelotomaculum thermopropionicum (strain DSM 13744 / JCM 10971 / SI).